The sequence spans 154 residues: UPF0178 protein SSP2038 (154 aa).

The protein belongs to the UPF0178 family.

This chain is UPF0178 protein SSP2038, found in Staphylococcus saprophyticus subsp. saprophyticus (strain ATCC 15305 / DSM 20229 / NCIMB 8711 / NCTC 7292 / S-41).